A 499-amino-acid chain; its full sequence is Probable cytosol aminopeptidase (499 aa).

Positions 267 and 272 each coordinate Mn(2+). The active site involves Lys279. 3 residues coordinate Mn(2+): Asp290, Asp349, and Glu351. The active site involves Arg353.

It belongs to the peptidase M17 family. Mn(2+) is required as a cofactor.

The protein resides in the cytoplasm. The enzyme catalyses Release of an N-terminal amino acid, Xaa-|-Yaa-, in which Xaa is preferably Leu, but may be other amino acids including Pro although not Arg or Lys, and Yaa may be Pro. Amino acid amides and methyl esters are also readily hydrolyzed, but rates on arylamides are exceedingly low.. It carries out the reaction Release of an N-terminal amino acid, preferentially leucine, but not glutamic or aspartic acids.. Presumably involved in the processing and regular turnover of intracellular proteins. Catalyzes the removal of unsubstituted N-terminal amino acids from various peptides. The polypeptide is Probable cytosol aminopeptidase (Alkaliphilus oremlandii (strain OhILAs) (Clostridium oremlandii (strain OhILAs))).